A 217-amino-acid chain; its full sequence is Protein LURP-one-related 2 (217 aa).

Belongs to the LOR family.

In terms of biological role, might be related to the phospholipid scramblase and tubby-like superfamily of membrane tethered transcription factors. This is Protein LURP-one-related 2 from Arabidopsis thaliana (Mouse-ear cress).